The following is a 288-amino-acid chain: Ion-translocating oxidoreductase complex subunit D (288 aa).

Helical transmembrane passes span 26–46, 47–67, 80–100, 101–121, 126–146, 159–179, 200–220, 235–255, and 256–276; these read IVAL…AALG, NIIA…KAFN, LGLL…IFIG, GAFA…YTFH, AWVF…IPIL, GFLT…LILV, VLGD…VFFI, IVYG…SGNY, and VWGT…IELK.

Belongs to the NqrB/RnfD family. The Rnf complex is probably composed of eight subunits, including RnfA, RnfB, RnfC, RnfD, RnfE and RnfG. The cofactor is FMN.

The protein localises to the cell membrane. Part of a membrane-bound complex that couples electron transfer with translocation of ions across the membrane. Catalyzes Na(+) transport, most probably coupled to electron transfer from reduced ferredoxin to methanophenazine and heterodisulfide reductase. Involved in heterodisulfide reduction during methanogenesis from acetate. This is Ion-translocating oxidoreductase complex subunit D from Methanosarcina acetivorans (strain ATCC 35395 / DSM 2834 / JCM 12185 / C2A).